The chain runs to 101 residues: Protein Tat (101 aa).

An interaction with human CREBBP region spans residues 1–24; sequence MEPVDPNLEPWNHPGSQPKTACNN. The segment at 1-48 is transactivation; the sequence is MEPVDPNLEPWNHPGSQPKTACNNCYCKRCSYHCLVCFQTKGLGISYG. Cysteine 22, cysteine 25, and cysteine 27 together coordinate Zn(2+). Residues 22–37 are cysteine-rich; sequence CNNCYCKRCSYHCLVC. Lysine 28 bears the N6-acetyllysine; by host PCAF mark. Zn(2+) contacts are provided by cysteine 30, histidine 33, cysteine 34, and cysteine 37. Positions 38–48 are core; sequence FQTKGLGISYG. A disordered region spans residues 47-101; that stretch reads YGRKKRRQRRSAPPSSEDHQNPIPKQPLPQTRGDQTGSEESKKKVESKTETDPFD. A Nuclear localization signal, RNA-binding (TAR), and protein transduction motif is present at residues 49–57; sequence RKKRRQRRS. Residues 49–86 are interaction with the host capping enzyme RNGTT; the sequence is RKKRRQRRSAPPSSEDHQNPIPKQPLPQTRGDQTGSEE. An N6-acetyllysine; by host EP300 and GCN5L2 mark is found at lysine 50 and lysine 51. Arginine 52 and arginine 53 each carry asymmetric dimethylarginine; by host PRMT6. A Glycyl lysine isopeptide (Lys-Gly) (interchain with G-Cter in ubiquitin) cross-link involves residue lysine 71. The Cell attachment site signature appears at 78–80; that stretch reads RGD. Over residues 85-101 the composition is skewed to basic and acidic residues; that stretch reads EESKKKVESKTETDPFD.

Belongs to the lentiviruses Tat family. Interacts with host CCNT1. Associates with the P-TEFb complex composed at least of Tat, P-TEFb (CDK9 and CCNT1), TAR RNA, RNA Pol II. Recruits the HATs CREBBP, TAF1/TFIID, EP300, PCAF and GCN5L2. Interacts with host KAT5/Tip60; this interaction targets the latter to degradation. Interacts with the host deacetylase SIRT1. Interacts with host capping enzyme RNGTT; this interaction stimulates RNGTT. Binds to host KDR, and to the host integrins ITGAV/ITGB3 and ITGA5/ITGB1. Interacts with host KPNB1/importin beta-1 without previous binding to KPNA1/importin alpha-1. Interacts with EIF2AK2. Interacts with host nucleosome assembly protein NAP1L1; this interaction may be required for the transport of Tat within the nucleus, since the two proteins interact at the nuclear rim. Interacts with host C1QBP/SF2P32; this interaction involves lysine-acetylated Tat. Interacts with the host chemokine receptors CCR2, CCR3 and CXCR4. Interacts with host DPP4/CD26; this interaction may trigger an anti-proliferative effect. Interacts with host LDLR. Interacts with the host extracellular matrix metalloproteinase MMP1. Interacts with host PRMT6; this interaction mediates Tat's methylation. Interacts with, and is ubiquitinated by MDM2/Hdm2. Interacts with host PSMC3 and HTATIP2. Interacts with STAB1; this interaction may overcome SATB1-mediated repression of IL2 and IL2RA (interleukin) in T cells by binding to the same domain than HDAC1. Interacts (when acetylated) with human CDK13, thereby increasing HIV-1 mRNA splicing and promoting the production of the doubly spliced HIV-1 protein Nef. Interacts with host TBP; this interaction modulates the activity of transcriptional pre-initiation complex. Interacts with host RELA. Interacts with host PLSCR1; this interaction negatively regulates Tat transactivation activity by altering its subcellular distribution. In terms of processing, asymmetrical arginine methylation by host PRMT6 seems to diminish the transactivation capacity of Tat and affects the interaction with host CCNT1. Post-translationally, acetylation by EP300, CREBBP, GCN5L2/GCN5 and PCAF regulates the transactivation activity of Tat. EP300-mediated acetylation of Lys-50 promotes dissociation of Tat from the TAR RNA through the competitive binding to PCAF's bromodomain. In addition, the non-acetylated Tat's N-terminus can also interact with PCAF. PCAF-mediated acetylation of Lys-28 enhances Tat's binding to CCNT1. Lys-50 is deacetylated by SIRT1. Polyubiquitination by host MDM2 does not target Tat to degradation, but activates its transactivation function and fosters interaction with CCNT1 and TAR RNA. In terms of processing, phosphorylated by EIF2AK2 on serine and threonine residues adjacent to the basic region important for TAR RNA binding and function. Phosphorylation of Tat by EIF2AK2 is dependent on the prior activation of EIF2AK2 by dsRNA.

It is found in the host nucleus. The protein localises to the host nucleolus. It localises to the host cytoplasm. The protein resides in the secreted. In terms of biological role, transcriptional activator that increases RNA Pol II processivity, thereby increasing the level of full-length viral transcripts. Recognizes a hairpin structure at the 5'-LTR of the nascent viral mRNAs referred to as the transactivation responsive RNA element (TAR) and recruits the cyclin T1-CDK9 complex (P-TEFb complex) that will in turn hyperphosphorylate the RNA polymerase II to allow efficient elongation. The CDK9 component of P-TEFb and other Tat-activated kinases hyperphosphorylate the C-terminus of RNA Pol II that becomes stabilized and much more processive. Other factors such as HTATSF1/Tat-SF1, SUPT5H/SPT5, and HTATIP2 are also important for Tat's function. Besides its effect on RNA Pol II processivity, Tat induces chromatin remodeling of proviral genes by recruiting the histone acetyltransferases (HATs) CREBBP, EP300 and PCAF to the chromatin. This also contributes to the increase in proviral transcription rate, especially when the provirus integrates in transcriptionally silent region of the host genome. To ensure maximal activation of the LTR, Tat mediates nuclear translocation of NF-kappa-B by interacting with host RELA. Through its interaction with host TBP, Tat may also modulate transcription initiation. Tat can reactivate a latently infected cell by penetrating in it and transactivating its LTR promoter. In the cytoplasm, Tat is thought to act as a translational activator of HIV-1 mRNAs. Extracellular circulating Tat can be endocytosed by surrounding uninfected cells via the binding to several surface receptors such as CD26, CXCR4, heparan sulfate proteoglycans (HSPG) or LDLR. Neurons are rarely infected, but they internalize Tat via their LDLR. Through its interaction with nuclear HATs, Tat is potentially able to control the acetylation-dependent cellular gene expression. Modulates the expression of many cellular genes involved in cell survival, proliferation or in coding for cytokines or cytokine receptors. Tat plays a role in T-cell and neurons apoptosis. Tat induced neurotoxicity and apoptosis probably contribute to neuroAIDS. Circulating Tat also acts as a chemokine-like and/or growth factor-like molecule that binds to specific receptors on the surface of the cells, affecting many cellular pathways. In the vascular system, Tat binds to ITGAV/ITGB3 and ITGA5/ITGB1 integrins dimers at the surface of endothelial cells and competes with bFGF for heparin-binding sites, leading to an excess of soluble bFGF. The polypeptide is Protein Tat (Human immunodeficiency virus type 1 group M subtype C (isolate 92BR025) (HIV-1)).